Consider the following 41-residue polypeptide: Antifungal peptide 2 (41 aa).

Residue Q1 is modified to Pyrrolidone carboxylic acid. Cystine bridges form between C3–C17, C7–C37, C11–C23, C16–C30, and C35–C39. A Chitin-binding type-1 domain is found at 4–41 (ASRCPRPCNAGLCCSIYGYCGSGAAYCGAGNCRCQCRG).

In terms of assembly, monomer.

Has antifungal activity against P.infestans, A.lycopersici, V.dahliae, G.zeae, A.nicotianae, F.moniliforme, F.oxysporum and C.gossypii. The sequence is that of Antifungal peptide 2 from Eucommia ulmoides (Hardy rubber tree).